Here is a 134-residue protein sequence, read N- to C-terminus: Profilin-1 (134 aa).

A disulfide bridge connects residues cysteine 13 and cysteine 118. The Involved in PIP2 interaction motif lies at 84-100 (AVVRGKKGSGGITIKKT). Phosphothreonine is present on threonine 114.

It belongs to the profilin family. In terms of assembly, occurs in many kinds of cells as a complex with monomeric actin in a 1:1 ratio. In terms of processing, phosphorylated by MAP kinases.

It is found in the cytoplasm. The protein localises to the cytoskeleton. In terms of biological role, binds to actin and affects the structure of the cytoskeleton. At high concentrations, profilin prevents the polymerization of actin, whereas it enhances it at low concentrations. This is Profilin-1 from Olea europaea (Common olive).